We begin with the raw amino-acid sequence, 488 residues long: Beta-xylosidase (488 aa).

Glu-163 acts as the Proton donor in catalysis. Catalysis depends on Glu-275, which acts as the Nucleophile.

The protein belongs to the glycosyl hydrolase 39 family.

The catalysed reaction is Hydrolysis of (1-&gt;4)-beta-D-xylans, to remove successive D-xylose residues from the non-reducing termini.. In terms of biological role, beta-xylosidase is an intracellular xylan-degrading enzyme. This chain is Beta-xylosidase (xynB), found in Caldicellulosiruptor saccharolyticus (Caldocellum saccharolyticum).